Here is a 529-residue protein sequence, read N- to C-terminus: Zinc finger protein 572 (529 aa).

The segment at 1-62 (MEQEKKLLVS…EWSKRHRPQH (62 aa)) is disordered. Residues lysine 5 and lysine 6 each participate in a glycyl lysine isopeptide (Lys-Gly) (interchain with G-Cter in SUMO2) cross-link. A compositionally biased stretch (polar residues) spans 26–35 (TGDTSMNNLE). Basic and acidic residues predominate over residues 36 to 55 (TVHHNNSKADKLKEKPSEWS). C2H2-type zinc fingers lie at residues 132-154 (YKCSECWKSFSNSSHLRTHQRTH), 160-182 (YKCSECAKCFCNSSHLIQHLRMH), 188-210 (YQCGECGKSFSNTSHLIIHERTH), 216-238 (YKCPECGKRFSSSSHLIQHHRSH), 244-266 (YECSVCGKGFSHSYVLIEHQRTH), 272-294 (YKCPDCGKSFSQSSSLIRHQRTH), 300-322 (YKCLECEKSFGCNSTLIKHQRIH), 328-350 (YQCPECGKNFSRSSNLITHQKMH), 384-406 (YRCCECGKSFGLSSHLIRHQRTH), 412-434 (YRCSECWKTFSQSSTLVIHQRTH), 440-462 (YKCPDCGESFSQSFNLIRHRRTH), and 468-490 (YKCTSCEKCFSRSAYLSQHRKIH).

The protein belongs to the krueppel C2H2-type zinc-finger protein family.

It localises to the nucleus. May be involved in transcriptional regulation. The sequence is that of Zinc finger protein 572 (ZNF572) from Homo sapiens (Human).